Consider the following 219-residue polypeptide: Guanylate kinase (219 aa).

One can recognise a Guanylate kinase-like domain in the interval 15–194 (GLMFVLSSPS…AFAEVQSILK (180 aa)). 22–29 (SPSGAGKT) provides a ligand contact to ATP.

Belongs to the guanylate kinase family.

It is found in the cytoplasm. It carries out the reaction GMP + ATP = GDP + ADP. In terms of biological role, essential for recycling GMP and indirectly, cGMP. The protein is Guanylate kinase of Nitrobacter winogradskyi (strain ATCC 25391 / DSM 10237 / CIP 104748 / NCIMB 11846 / Nb-255).